The sequence spans 378 residues: Probable selenide, water dikinase (378 aa).

Cys-33 is a catalytic residue. ATP is bound by residues Lys-36, 63 to 65, Asp-83, Asp-106, and 158 to 160; these read GLD and GQT. Asp-65 provides a ligand contact to Mg(2+). Residue Asp-106 participates in Mg(2+) binding. Asp-260 contributes to the Mg(2+) binding site.

The protein belongs to the selenophosphate synthase 1 family. Class I subfamily. Homodimer. Mg(2+) is required as a cofactor.

The enzyme catalyses hydrogenselenide + ATP + H2O = selenophosphate + AMP + phosphate + 2 H(+). Synthesizes selenophosphate from selenide and ATP. The chain is Probable selenide, water dikinase (seld-1) from Caenorhabditis elegans.